The primary structure comprises 471 residues: dTDP-4-dehydro-6-deoxy-alpha-D-glucopyranose 2,3-dehydratase (471 aa).

Residues W67, 155–159 (TRSNY), S193, N238, W288, R351, 367–369 (QCT), 372–373 (NY), and 405–408 (EGGR) contribute to the dTDP-4-dehydro-6-deoxy-alpha-D-glucose site.

Belongs to the hexose 2,3-dehydratase family. Homodimer.

It carries out the reaction dTDP-4-dehydro-6-deoxy-alpha-D-glucose = dTDP-3,4-didehydro-2,6-dideoxy-alpha-D-glucose + H2O. The protein operates within antibiotic biosynthesis. Involved in the biosynthesis of the 2,3,6-trideoxysugar L-epivancosamine, the terminal sugar added to the aglycone scaffold of chloroeremomycin, a member of the glycopeptide antibiotics vancomycin family. Catalyzes the removal of the hydroxyl group at position C-2 of the hexose ring of dTDP-4-dehydro-6-deoxy-alpha-D-glucopyranose, and the oxidation of the hydroxyl group at position C-3 to form a carbonyl functionality. The product of the reaction, dTDP-2,6-dideoxy-D-glycero-hex-2-enos-4-ulose, is a highly unstable diketosugar, which spontaneously forms dTDP-3,4-didehydro-2,6-dideoxy-alpha-D-glucose. The protein is dTDP-4-dehydro-6-deoxy-alpha-D-glucopyranose 2,3-dehydratase of Amycolatopsis orientalis (Nocardia orientalis).